Consider the following 423-residue polypeptide: Probable sucrose-phosphate synthase (423 aa).

This sequence belongs to the glycosyltransferase 1 family.

The enzyme catalyses beta-D-fructose 6-phosphate + UDP-alpha-D-glucose = sucrose 6(F)-phosphate + UDP + H(+). In terms of biological role, plays a role in sucrose synthesis by catalyzing the first step of sucrose biosynthesis from UDP-glucose and fructose-6-phosphate. The chain is Probable sucrose-phosphate synthase from Thermosipho melanesiensis (strain DSM 12029 / CIP 104789 / BI429).